Here is a 1467-residue protein sequence, read N- to C-terminus: MGAATSALNRRQLDKFEHIRLRPTGKKKYQIKHLIWAGKEMERFGLHERLLESEEGCKKIIEVLYPLEPTGSEGLKSLFNLVCVLFCVHKDKEVKDTEEAVAIVRQCCHLVEKERNAERNTTETSSGQKKNDKGVTVPPGGSQNFPAQQQGNAWIHVPLSPRTLNAWVKAVEEKKFGAEIVPMFQALSEGCTPYDINQMLNVLGDHQGALQIVKEIINEEAAQWDIAHPPPAGPLPAGQLRDPRGSDIAGTTSTVQEQLEWIYTANPRVDVGAIYRRWIILGLQKCVKMYNPVSVLDIRQGPKEAFKDYVDRFYKAIRAEQASGEVKQWMTESLLIQNANPDCKVILKGLGMHPTLEEMLTACQGVGGPSYKAKVMAEMMQNMQSQNMMQQGGQRGRPRPPVKCYNCGKFGHMQRQCPEPRKMRCLKCGKPGHLAKDCRGQVNFFRVWTVDGGKTEKFSRRYSWSGTECASSTERHHPIRPSKEAPAAICRERETTEGAKEESTGNESGLDRGIFFELPLWRRPIKTVYIEGVPIKALLDTGADDTIIKENDLQLSGPWRPKIIGGIGGGLNVKEYNDREVKIEDKILRGTILLGATPINIIGRNLLAPAVPRLVMGQLSEKIPVTPVKLKEGARGPCVRQWPLSKEKIEALQEICSQLEQEGKISRVGGENAYNTPIFCIKKKDKSQWRMLVDFRELNKATQDFFEVQLGIPHPAGLRKMRQITVLDVGDAYYSIPLDPNFRKYTAFTIPTVNNQGPGIRYQFNCLPQGWKGSPTIFQNTAASILEEIKRNLPALTIVQYMDDLWVGSQENEHTHDKLVEQLRTKLQAWGLETPEKKMQKEPPYEWMGYKLWPHKWELSRIQLEEKDEWTVNDIQKLVGKLNWAAQLYPGLKTRICKLITGGKKNLLELVAWTPEAEAEYAENAEILKTEQEGTYYKPGIPIRAAVQKLEGGQWSYQFKQEGQVLKVGKYTKQKNTHTNELRTLAGLVQKICKEALVIWGILPVLELPIEREVWEQWWADYWQVSWIPEWDFVSTPPLLKLWYTLTKEPIPKEDVYYVGACNRNSKEGKAGYISQYGKQRVETLENTTNQQAKLTAIKMALEDSGPNVNIVTDSQYAMGILTAQPTQSDSPLVEQIIALMIQKQQIYLQWVPAHKGIGGNEEIDKLVSKGIRRVLFLEKIEEAQEKHERYHNNWKNLADTYGLPQIVAKEIVAMCPKCQIKGEPVHGQVDASPGTWQMDCTHLEKKVVIVAVHVASGFIEAEVIPRETGKETAKFLLKILSRWPITQLHTDNGPNFTSQEVAAICWWGKIEHTTGIPYNPQSQGSIESMNKQLKEIIGKIRDDCQYTEAAVLMACILHNFKRKGGIGGQTSAERLINIITTQLEIQHLQTKIQKILNFRVYYREGRDPVWKGPAQLIWKGEGAVVLKDGSDLKVVPRRKAKIIKDYEPKQRVGNEGDVEGTRGSDN.

Gly2 carries N-myristoyl glycine; by host lipidation. Positions 16–22 (FEHIRLR) match the Nuclear export signal motif. The Nuclear localization signal signature appears at 26–32 (KKKYQIK). The tract at residues 116-144 (NAERNTTETSSGQKKNDKGVTVPPGGSQN) is disordered. 2 consecutive CCHC-type zinc fingers follow at residues 402–419 (VKCY…QCPE) and 423–440 (MRCL…DCRG). The Peptidase A2 domain maps to 535–606 (IKALLDTGAD…TPINIIGRNL (72 aa)). The active-site For protease activity; shared with dimeric partner is Asp540. The Reverse transcriptase domain occupies 662 to 852 (EGKISRVGGE…PPYEWMGYKL (191 aa)). 3 residues coordinate Mg(2+): Asp728, Asp803, and Asp804. The tract at residues 845-853 (YEWMGYKLW) is RT 'primer grip'. The short motif at 1015–1031 (WEQWWADYWQVSWIPEW) is the Tryptophan repeat motif element. Residues 1050-1173 (PIPKEDVYYV…IDKLVSKGIR (124 aa)) form the RNase H type-1 domain. The Mg(2+) site is built by Asp1114 and Asp1165. Residues 1179–1220 (EKIEEAQEKHERYHNNWKNLADTYGLPQIVAKEIVAMCPKCQ) form an Integrase-type zinc finger. The Zn(2+) site is built by His1188, His1192, Cys1216, and Cys1219. Positions 1230-1380 (VDASPGTWQM…TSAERLINII (151 aa)) constitute an Integrase catalytic domain. Mg(2+)-binding residues include Asp1240 and Asp1292. A DNA-binding region (integrase-type) is located at residues 1399–1446 (FRVYYREGRDPVWKGPAQLIWKGEGAVVLKDGSDLKVVPRRKAKIIKD). Residues 1447 to 1467 (YEPKQRVGNEGDVEGTRGSDN) are disordered.

As to quaternary structure, homotrimer. Interacts with gp41 (via C-terminus). Homodimer. The active site consists of two apposed aspartic acid residues. In terms of assembly, heterodimer of p66 RT and p51 RT (RT p66/p51). Heterodimerization of RT is essential for DNA polymerase activity. Despite the sequence identities, p66 RT and p51 RT have distinct folding. As to quaternary structure, homotetramer; may further associate as a homohexadecamer. Mg(2+) is required as a cofactor. Specific enzymatic cleavages by the viral protease yield mature proteins. The protease is released by autocatalytic cleavage. The polyprotein is cleaved during and after budding, this process is termed maturation. Proteolytic cleavage of p66 RT removes the RNase H domain to yield the p51 RT subunit. Post-translationally, capsid protein p24 is phosphorylated.

The protein localises to the virion. It is found in the host nucleus. Its subcellular location is the host cytoplasm. It localises to the host cell membrane. The catalysed reaction is Specific for a P1 residue that is hydrophobic, and P1' variable, but often Pro.. It carries out the reaction Endohydrolysis of RNA in RNA/DNA hybrids. Three different cleavage modes: 1. sequence-specific internal cleavage of RNA. Human immunodeficiency virus type 1 and Moloney murine leukemia virus enzymes prefer to cleave the RNA strand one nucleotide away from the RNA-DNA junction. 2. RNA 5'-end directed cleavage 13-19 nucleotides from the RNA end. 3. DNA 3'-end directed cleavage 15-20 nucleotides away from the primer terminus.. It catalyses the reaction 3'-end directed exonucleolytic cleavage of viral RNA-DNA hybrid.. The enzyme catalyses DNA(n) + a 2'-deoxyribonucleoside 5'-triphosphate = DNA(n+1) + diphosphate. The viral protease is inhibited by many synthetic protease inhibitors (PIs), such as amprenavir, atazanavir, indinavir, loprinavir, nelfinavir, ritonavir and saquinavir. RT can be inhibited either by nucleoside RT inhibitors (NRTIs) or by non nucleoside RT inhibitors (NNRTIs). NRTIs act as chain terminators, whereas NNRTIs inhibit DNA polymerization by binding a small hydrophobic pocket near the RT active site and inducing an allosteric change in this region. Classical NRTIs are abacavir, adefovir (PMEA), didanosine (ddI), lamivudine (3TC), stavudine (d4T), tenofovir (PMPA), zalcitabine (ddC), and zidovudine (AZT). Classical NNRTIs are atevirdine (BHAP U-87201E), delavirdine, efavirenz (DMP-266), emivirine (I-EBU), and nevirapine (BI-RG-587). The tritherapies used as a basic effective treatment of AIDS associate two NRTIs and one NNRTI. Use of protease inhibitors in tritherapy regimens permit more ambitious therapeutic strategies. Its function is as follows. Gag-Pol polyprotein and Gag polyprotein may regulate their own translation, by the binding genomic RNA in the 5'-UTR. At low concentration, Gag-Pol and Gag would promote translation, whereas at high concentration, the polyproteins encapsidate genomic RNA and then shut off translation. Functionally, matrix protein p17 has two main functions: in infected cell, it targets Gag and Gag-pol polyproteins to the plasma membrane via a multipartite membrane-binding signal, that includes its myristointegration complex. The myristoylation signal and the NLS exert conflicting influences its subcellular localization. The key regulation of these motifs might be phosphorylation of a portion of MA molecules on the C-terminal tyrosine at the time of virus maturation, by virion-associated cellular tyrosine kinase. Implicated in the release from host cell mediated by Vpu. Capsid protein p24 forms the conical core that encapsulates the genomic RNA-nucleocapsid complex in the virion. The core is constituted by capsid protein hexamer subunits. The core is disassembled soon after virion entry. Interaction with host PPIA/CYPA protects the virus from restriction by host TRIM5-alpha and from an unknown antiviral activity in host cells. This capsid restriction by TRIM5 is one of the factors which restricts SIV to the simian species. In terms of biological role, nucleocapsid protein p7 encapsulates and protects viral dimeric unspliced (genomic) RNA. Binds these RNAs through its zinc fingers. Facilitates rearangement of nucleic acid secondary structure during retrotranscription of genomic RNA. This capability is referred to as nucleic acid chaperone activity. Its function is as follows. The aspartyl protease mediates proteolytic cleavages of Gag and Gag-Pol polyproteins during or shortly after the release of the virion from the plasma membrane. Cleavages take place as an ordered, step-wise cascade to yield mature proteins. This process is called maturation. Displays maximal activity during the budding process just prior to particle release from the cell. Also cleaves Nef and Vif, probably concomitantly with viral structural proteins on maturation of virus particles. Hydrolyzes host EIF4GI and PABP1 in order to shut off the capped cellular mRNA translation. The resulting inhibition of cellular protein synthesis serves to ensure maximal viral gene expression and to evade host immune response. Functionally, reverse transcriptase/ribonuclease H (RT) is a multifunctional enzyme that converts the viral dimeric RNA genome into dsDNA in the cytoplasm, shortly after virus entry into the cell. This enzyme displays a DNA polymerase activity that can copy either DNA or RNA templates, and a ribonuclease H (RNase H) activity that cleaves the RNA strand of RNA-DNA heteroduplexes in a partially processive 3' to 5' endonucleasic mode. Conversion of viral genomic RNA into dsDNA requires many steps. A tRNA binds to the primer-binding site (PBS) situated at the 5'-end of the viral RNA. RT uses the 3' end of the tRNA primer to perform a short round of RNA-dependent minus-strand DNA synthesis. The reading proceeds through the U5 region and ends after the repeated (R) region which is present at both ends of viral RNA. The portion of the RNA-DNA heteroduplex is digested by the RNase H, resulting in a ssDNA product attached to the tRNA primer. This ssDNA/tRNA hybridizes with the identical R region situated at the 3' end of viral RNA. This template exchange, known as minus-strand DNA strong stop transfer, can be either intra- or intermolecular. RT uses the 3' end of this newly synthesized short ssDNA to perform the RNA-dependent minus-strand DNA synthesis of the whole template. RNase H digests the RNA template except for two polypurine tracts (PPTs) situated at the 5'-end and near the center of the genome. It is not clear if both polymerase and RNase H activities are simultaneous. RNase H can probably proceed both in a polymerase-dependent (RNA cut into small fragments by the same RT performing DNA synthesis) and a polymerase-independent mode (cleavage of remaining RNA fragments by free RTs). Secondly, RT performs DNA-directed plus-strand DNA synthesis using the PPTs that have not been removed by RNase H as primers. PPTs and tRNA primers are then removed by RNase H. The 3' and 5' ssDNA PBS regions hybridize to form a circular dsDNA intermediate. Strand displacement synthesis by RT to the PBS and PPT ends produces a blunt ended, linear dsDNA copy of the viral genome that includes long terminal repeats (LTRs) at both ends. Integrase catalyzes viral DNA integration into the host chromosome, by performing a series of DNA cutting and joining reactions. This enzyme activity takes place after virion entry into a cell and reverse transcription of the RNA genome in dsDNA. The first step in the integration process is 3' processing. This step requires a complex comprising the viral genome, matrix protein, Vpr and integrase. This complex is called the pre-integration complex (PIC). The integrase protein removes 2 nucleotides from each 3' end of the viral DNA, leaving recessed CA OH's at the 3' ends. In the second step, the PIC enters cell nucleus. This process is mediated through integrase and Vpr proteins, and allows the virus to infect a non dividing cell. This ability to enter the nucleus is specific of lentiviruses, other retroviruses cannot and rely on cell division to access cell chromosomes. In the third step, termed strand transfer, the integrase protein joins the previously processed 3' ends to the 5' ends of strands of target cellular DNA at the site of integration. The 5'-ends are produced by integrase-catalyzed staggered cuts, 5 bp apart. A Y-shaped, gapped, recombination intermediate results, with the 5'-ends of the viral DNA strands and the 3' ends of target DNA strands remaining unjoined, flanking a gap of 5 bp. The last step is viral DNA integration into host chromosome. This involves host DNA repair synthesis in which the 5 bp gaps between the unjoined strands are filled in and then ligated. Since this process occurs at both cuts flanking the SIV genome, a 5 bp duplication of host DNA is produced at the ends of SIV integration. Alternatively, Integrase may catalyze the excision of viral DNA just after strand transfer, this is termed disintegration. The sequence is that of Gag-Pol polyprotein (gag-pol) from Cercopithecidae (Old World monkeys).